The chain runs to 354 residues: MSSATAAATATIAAAAAKLAATPAPAPSRRRLTLRGNPTARRCVAAMAVSTPRSAAAAAFLERRESERALHFVKYQGLGNDFIMVDNRDSAVPKVTPEEAAKLCDRNFGVGADGVIFVMPGVNGADYTMRIFNSDGSEPEMCGNGVRCFARFIAELENLQGTHSFKIHTGAGLIIPEIQNDGKVKVDMGQPILSGPDIPTKLPSTKNEAVVQADLAVDGSTWQVTCVSMGNPHCVTFGTKELKVLHVDDLKLSDIGPKFEHHEMFPARTNTEFVEVLSRSHLKMRVWERGAGATLACGTGACAVVVAAVLEGRAERKCVVDLPGGPLEIEWREDDNHIYMTGPAEAVFYGSAVH.

The N-terminal 44 residues, 1–44 (MSSATAAATATIAAAAAKLAATPAPAPSRRRLTLRGNPTARRCV), are a transit peptide targeting the chloroplast. Residues C142 and C297 contribute to the active site.

Belongs to the diaminopimelate epimerase family.

Its subcellular location is the plastid. It is found in the chloroplast. It carries out the reaction (2S,6S)-2,6-diaminopimelate = meso-2,6-diaminopimelate. It participates in amino-acid biosynthesis; L-lysine biosynthesis via DAP pathway; DL-2,6-diaminopimelate from LL-2,6-diaminopimelate: step 1/1. The sequence is that of Diaminopimelate epimerase, chloroplastic (DAPF) from Oryza sativa subsp. japonica (Rice).